The primary structure comprises 239 residues: LexA repressor (239 aa).

Residues 26 to 46 constitute a DNA-binding region (H-T-H motif); sequence FDEMKDALDLASKSGIHRLIT. Positions 84 to 107 are disordered; sequence SPSVIEGSLGKPQPVATPAPAKSV. Residues S159 and K197 each act as for autocatalytic cleavage activity in the active site.

It belongs to the peptidase S24 family. As to quaternary structure, homodimer.

The enzyme catalyses Hydrolysis of Ala-|-Gly bond in repressor LexA.. In terms of biological role, represses a number of genes involved in the response to DNA damage (SOS response), including recA and lexA. In the presence of single-stranded DNA, RecA interacts with LexA causing an autocatalytic cleavage which disrupts the DNA-binding part of LexA, leading to derepression of the SOS regulon and eventually DNA repair. The sequence is that of LexA repressor from Rhizobium johnstonii (strain DSM 114642 / LMG 32736 / 3841) (Rhizobium leguminosarum bv. viciae).